A 318-amino-acid polypeptide reads, in one-letter code: Protein FdhE homolog (318 aa).

Belongs to the FdhE family.

Its subcellular location is the cytoplasm. Necessary for formate dehydrogenase activity. This Pseudomonas putida (strain ATCC 47054 / DSM 6125 / CFBP 8728 / NCIMB 11950 / KT2440) protein is Protein FdhE homolog.